Consider the following 723-residue polypeptide: Threonine--tRNA ligase 1, cytoplasmic (723 aa).

The segment covering 1–10 has biased composition (polar residues); it reads MSEEQASSPS. The interval 1 to 49 is disordered; that stretch reads MSEEQASSPSAKMGDEEKPVGAGEEKQKEGSKKKNKEGSGDGGRAELNP. Basic and acidic residues predominate over residues 13–39; sequence MGDEEKPVGAGEEKQKEGSKKKNKEGS. S39 is modified (phosphoserine). Residues 79–143 enclose the TGS domain; the sequence is DSKPIKVTLP…EEDCTLELLK (65 aa). K243 carries the N6-acetyllysine modification. Residue T246 is modified to Phosphothreonine. Residue Y298 is modified to Phosphotyrosine. T453 is modified (phosphothreonine). Phosphoserine is present on S702.

This sequence belongs to the class-II aminoacyl-tRNA synthetase family. As to quaternary structure, homodimer. ISGylated.

It is found in the cytoplasm. The catalysed reaction is tRNA(Thr) + L-threonine + ATP = L-threonyl-tRNA(Thr) + AMP + diphosphate + H(+). Catalyzes the attachment of threonine to tRNA(Thr) in a two-step reaction: threonine is first activated by ATP to form Thr-AMP and then transferred to the acceptor end of tRNA(Thr). Also edits incorrectly charged tRNA(Thr) via its editing domain, at the post-transfer stage. The chain is Threonine--tRNA ligase 1, cytoplasmic (TARS1) from Bos taurus (Bovine).